Reading from the N-terminus, the 267-residue chain is MRKTWPLLTLLLCTCASAQLRADIAHNTPPGQATMQVYDGEKVLFQATTPGLNAVTASKFSPDGRWLLNIADGSGYVQLWDTAKGERVKTFLSVYFRIFGADFTPDSERLLLDFSGSKERADPRRPAYFPSPSLWNLATLERISFVYNDKRESFYNGKVTFSQDGERMAFVRPNAYSSGPASVWNAKTGAYIATISRLPYPKGAAQTGGAGAMDARLSPDGQRVLVRYVDNRLAEYDASTGTLLKVRGKFSAADAGAELERFAREGR.

One copy of the WD repeat lies at 50–90 (PGLNAVTASKFSPDGRWLLNIADGSGYVQLWDTAKGERVKT).

This is an uncharacterized protein from Deinococcus radiodurans (strain ATCC 13939 / DSM 20539 / JCM 16871 / CCUG 27074 / LMG 4051 / NBRC 15346 / NCIMB 9279 / VKM B-1422 / R1).